The following is a 194-amino-acid chain: Ribonuclease HII (194 aa).

The 191-residue stretch at 3–193 (ILTAGVDEAG…VRNLLAQQAL (191 aa)) folds into the RNase H type-2 domain. The a divalent metal cation site is built by Asp9, Glu10, and Asp101.

Belongs to the RNase HII family. It depends on Mn(2+) as a cofactor. Mg(2+) is required as a cofactor.

It is found in the cytoplasm. The enzyme catalyses Endonucleolytic cleavage to 5'-phosphomonoester.. Functionally, endonuclease that specifically degrades the RNA of RNA-DNA hybrids. In Neisseria meningitidis serogroup A / serotype 4A (strain DSM 15465 / Z2491), this protein is Ribonuclease HII (rnhB).